Reading from the N-terminus, the 244-residue chain is Zinc import ATP-binding protein ZnuC 2 (244 aa).

One can recognise an ABC transporter domain in the interval 3–218 (IGCASLTIQL…PEYLALFGID (216 aa)). Position 35-42 (35-42 (GPNGSGKT)) interacts with ATP.

It belongs to the ABC transporter superfamily. Zinc importer (TC 3.A.1.15.5) family. The complex is composed of two ATP-binding proteins (ZnuC), two transmembrane proteins (ZnuB) and a solute-binding protein (ZnuA).

It localises to the cell inner membrane. The catalysed reaction is Zn(2+)(out) + ATP(in) + H2O(in) = Zn(2+)(in) + ADP(in) + phosphate(in) + H(+)(in). Functionally, part of the ABC transporter complex ZnuABC involved in zinc import. Responsible for energy coupling to the transport system. This chain is Zinc import ATP-binding protein ZnuC 2, found in Hahella chejuensis (strain KCTC 2396).